A 157-amino-acid polypeptide reads, in one-letter code: 2-C-methyl-D-erythritol 2,4-cyclodiphosphate synthase (157 aa).

A divalent metal cation-binding residues include aspartate 8 and histidine 10. Residues 8–10 (DVH) and 34–35 (HS) each bind 4-CDP-2-C-methyl-D-erythritol 2-phosphate. A divalent metal cation is bound at residue histidine 42. 4-CDP-2-C-methyl-D-erythritol 2-phosphate-binding positions include 56–58 (DIG), 61–65 (FPDTD), 100–106 (AQAPKMA), 132–135 (TTSE), phenylalanine 139, and arginine 142.

Belongs to the IspF family. As to quaternary structure, homotrimer. The cofactor is a divalent metal cation.

It catalyses the reaction 4-CDP-2-C-methyl-D-erythritol 2-phosphate = 2-C-methyl-D-erythritol 2,4-cyclic diphosphate + CMP. The protein operates within isoprenoid biosynthesis; isopentenyl diphosphate biosynthesis via DXP pathway; isopentenyl diphosphate from 1-deoxy-D-xylulose 5-phosphate: step 4/6. Its function is as follows. Involved in the biosynthesis of isopentenyl diphosphate (IPP) and dimethylallyl diphosphate (DMAPP), two major building blocks of isoprenoid compounds. Catalyzes the conversion of 4-diphosphocytidyl-2-C-methyl-D-erythritol 2-phosphate (CDP-ME2P) to 2-C-methyl-D-erythritol 2,4-cyclodiphosphate (ME-CPP) with a corresponding release of cytidine 5-monophosphate (CMP). The polypeptide is 2-C-methyl-D-erythritol 2,4-cyclodiphosphate synthase (Photobacterium profundum (strain SS9)).